Consider the following 178-residue polypeptide: Endothelin-2 (178 aa).

A signal peptide spans 1 to 26 (MVAMPTAWCSIALALLLALHEGKGQV). Residues 27–46 (AAAPDQPAPSHRARASHLRP) constitute a propeptide that is removed on maturation. Intrachain disulfides connect Cys-49–Cys-63 and Cys-51–Cys-59. Positions 70–178 (VNTPGQTAPY…RPTHSRRWKR (109 aa)) are excised as a propeptide. Residues 96 to 111 (CECSSGRDPACATFCH) are endothelin-like.

This sequence belongs to the endothelin/sarafotoxin family.

It is found in the secreted. Endothelins are endothelium-derived vasoconstrictor peptides. The polypeptide is Endothelin-2 (EDN2) (Felis catus (Cat)).